The sequence spans 263 residues: L-aspartate dehydrogenase (263 aa).

NAD(+) is bound by residues A120 and N186. The active site involves H216.

It belongs to the L-aspartate dehydrogenase family.

It carries out the reaction L-aspartate + NADP(+) + H2O = oxaloacetate + NH4(+) + NADPH + H(+). The catalysed reaction is L-aspartate + NAD(+) + H2O = oxaloacetate + NH4(+) + NADH + H(+). Its pathway is cofactor biosynthesis; NAD(+) biosynthesis; iminoaspartate from L-aspartate (dehydrogenase route): step 1/1. Functionally, specifically catalyzes the NAD or NADP-dependent dehydrogenation of L-aspartate to iminoaspartate. The sequence is that of L-aspartate dehydrogenase from Acinetobacter baumannii (strain AB307-0294).